We begin with the raw amino-acid sequence, 203 residues long: Probable GTP-binding protein EngB (203 aa).

Residues 21–196 (GAPEIAFLGR…WKKIFEAAGT (176 aa)) form the EngB-type G domain. GTP contacts are provided by residues 29 to 36 (GRSNVGKS), 55 to 59 (GRTQT), 79 to 82 (DLPG), 146 to 149 (TKID), and 175 to 177 (FSA). Mg(2+) is bound by residues Ser-36 and Thr-57.

It belongs to the TRAFAC class TrmE-Era-EngA-EngB-Septin-like GTPase superfamily. EngB GTPase family. Mg(2+) serves as cofactor.

Its function is as follows. Necessary for normal cell division and for the maintenance of normal septation. The chain is Probable GTP-binding protein EngB from Koribacter versatilis (strain Ellin345).